The chain runs to 107 residues: Ferredoxin 1 (107 aa).

4Fe-4S ferredoxin-type domains are found at residues 2–30 (TFVVTDNCIKCKYTDCVEVCPVDCFYEGP) and 31–60 (NFLVIHPDECIDCALCEPECPAQAIFSEDE). Cys9 and Cys17 together coordinate [3Fe-4S] cluster. Positions 21, 40, 43, and 46 each coordinate [4Fe-4S] cluster. Residue Cys50 participates in [3Fe-4S] cluster binding.

The cofactor is [4Fe-4S] cluster. It depends on [3Fe-4S] cluster as a cofactor.

Ferredoxins are iron-sulfur proteins that transfer electrons in a wide variety of metabolic reactions. This chain is Ferredoxin 1 (fdxA), found in Pseudomonas aeruginosa (strain ATCC 15692 / DSM 22644 / CIP 104116 / JCM 14847 / LMG 12228 / 1C / PRS 101 / PAO1).